A 265-amino-acid polypeptide reads, in one-letter code: Glutamate racemase 2 (265 aa).

Substrate is bound by residues 7–8 (DS) and 39–40 (YG). Catalysis depends on Cys70, which acts as the Proton donor/acceptor. 71 to 72 (NT) contacts substrate. Residue Cys182 is the Proton donor/acceptor of the active site. 183 to 184 (TH) is a binding site for substrate.

It belongs to the aspartate/glutamate racemases family.

It catalyses the reaction L-glutamate = D-glutamate. The protein operates within cell wall biogenesis; peptidoglycan biosynthesis. In terms of biological role, provides the (R)-glutamate required for cell wall biosynthesis. In Bacillus subtilis (strain 168), this protein is Glutamate racemase 2 (yrpC).